A 600-amino-acid chain; its full sequence is Glutamine--fructose-6-phosphate aminotransferase [isomerizing] (600 aa).

Catalysis depends on cysteine 2, which acts as the Nucleophile; for GATase activity. A Glutamine amidotransferase type-2 domain is found at 2-217; the sequence is CGIVGYIGQL…DKEMVIVTDD (216 aa). SIS domains are found at residues 283 to 422 and 452 to 590; these read IAAA…KNGI and IARE…VDKP. Residue lysine 595 is the For Fru-6P isomerization activity of the active site.

Homodimer.

The protein localises to the cytoplasm. It catalyses the reaction D-fructose 6-phosphate + L-glutamine = D-glucosamine 6-phosphate + L-glutamate. Its function is as follows. Catalyzes the first step in hexosamine metabolism, converting fructose-6P into glucosamine-6P using glutamine as a nitrogen source. The sequence is that of Glutamine--fructose-6-phosphate aminotransferase [isomerizing] from Bacillus subtilis (strain 168).